Here is a 702-residue protein sequence, read N- to C-terminus: Autophagy-related protein 9 (702 aa).

The Cytoplasmic portion of the chain corresponds to 1–205; it reads MFYQPAQNKK…GKGLSCIIVH (205 aa). Residues 35–128 are disordered; the sequence is QESLDSDEDE…SKQKPALPNF (94 aa). A compositionally biased stretch (acidic residues) spans 38-47; it reads LDSDEDESSP. The span at 94-107 shows a compositional bias: low complexity; the sequence is SSKVPSKHPSPSFP. Residues 108 to 120 are compositionally biased toward polar residues; it reads ETTSLRNLQNGSK. A helical membrane pass occupies residues 206–223; it reads RLFQILTVSFVIGFTTFI. The Lumenal portion of the chain corresponds to 224–251; the sequence is TSCIDWPAVTPHGSLAGVTKSQCIAQMS. The chain crosses the membrane as a helical span at residues 252–270; sequence PITYLVLWLFLSFLLALWI. Topologically, residues 271–421 are cytoplasmic; it reads YYLTDIPRLW…RRRFIVAGFL (151 aa). Residues 422-446 lie within the membrane without spanning it; sequence NCLFAPIVAIYLVIHNFFRYFNEYH. Residues 447–496 are Cytoplasmic-facing; the sequence is KNPGALSTRRYTPLALWTFREYNELQHFFDERINDSYAAASHYVSQFPDF. A helical membrane pass occupies residues 497 to 522; the sequence is NMIRLFKYISFILGSFTAILVIITVF. Residues 523 to 537 lie on the Lumenal side of the membrane; that stretch reads DPELMVTFEITKDRS. Residues 538-555 traverse the membrane as a helical segment; sequence VLFYLGLFGSLIAVSRSI. Over 556-603 the chain is Cytoplasmic; it reads IPDETLVFAPEKALRRVITFTHYMPGWWSDNMHSKAVQQEFCSLYSYR. An intramembrane segment occupies 604–624; sequence IVNLLWEILGILLTPVLLFFT. Over 625–702 the chain is Cytoplasmic; that stretch reads FPSCSQDIVD…NTEAPRRDLR (78 aa).

Belongs to the ATG9 family. As to quaternary structure, homotrimer; forms a homotrimer with a central pore that forms a path between the two membrane leaflets. Interacts with ctl1. Post-translationally, phosphorylated by atg1. Atg1 phosphorylation is required for preautophagosome elongation.

Its subcellular location is the preautophagosomal structure membrane. It is found in the cytoplasmic vesicle membrane. The protein resides in the golgi apparatus membrane. It localises to the endoplasmic reticulum membrane. It catalyses the reaction a 1,2-diacyl-sn-glycero-3-phosphocholine(in) = a 1,2-diacyl-sn-glycero-3-phosphocholine(out). The catalysed reaction is a 1,2-diacyl-sn-glycero-3-phospho-L-serine(in) = a 1,2-diacyl-sn-glycero-3-phospho-L-serine(out). The enzyme catalyses a 1,2-diacyl-sn-glycero-3-phosphoethanolamine(in) = a 1,2-diacyl-sn-glycero-3-phosphoethanolamine(out). It carries out the reaction a 1,2-diacyl-sn-glycero-3-phospho-(1D-myo-inositol-3-phosphate)(in) = a 1,2-diacyl-sn-glycero-3-phospho-(1D-myo-inositol-3-phosphate)(out). Functionally, phospholipid scramblase involved in autophagy and cytoplasm to vacuole transport (Cvt) vesicle formation. Cycles between the preautophagosomal structure/phagophore assembly site (PAS) and the cytoplasmic vesicle pool and supplies membrane for the growing autophagosome. Lipid scramblase activity plays a key role in preautophagosomal structure/phagophore assembly by distributing the phospholipids that arrive through atg2 from the cytoplasmic to the luminal leaflet of the bilayer, thereby driving autophagosomal membrane expansion. Also involved in endoplasmic reticulum-specific autophagic process and is essential for the survival of cells subjected to severe ER stress. Different machineries are required for anterograde trafficking to the PAS during either the Cvt pathway or bulk autophagy and for retrograde trafficking. Has a role in meiosis and sporulation. The polypeptide is Autophagy-related protein 9 (Schizosaccharomyces pombe (strain 972 / ATCC 24843) (Fission yeast)).